A 264-amino-acid polypeptide reads, in one-letter code: Zinc import ATP-binding protein ZnuC (264 aa).

Residues 11-226 form the ABC transporter domain; it reads IELKGVNVTF…PVFIRFFGNQ (216 aa). 43–50 is a binding site for ATP; the sequence is GPNGGGKS.

It belongs to the ABC transporter superfamily. Zinc importer (TC 3.A.1.15.5) family. The complex is composed of two ATP-binding proteins (ZnuC), two transmembrane proteins (ZnuB) and a solute-binding protein (ZnuA).

It localises to the cell inner membrane. It carries out the reaction Zn(2+)(out) + ATP(in) + H2O(in) = Zn(2+)(in) + ADP(in) + phosphate(in) + H(+)(in). Functionally, part of the ABC transporter complex ZnuABC involved in zinc import. Responsible for energy coupling to the transport system. This chain is Zinc import ATP-binding protein ZnuC, found in Histophilus somni (strain 129Pt) (Haemophilus somnus).